Consider the following 337-residue polypeptide: Serpentine receptor class alpha-17 (337 aa).

A run of 6 helical transmembrane segments spans residues 28–48 (LNFV…GLAI), 110–130 (ELYF…SLTF), 155–175 (IIQL…VPLV), 197–217 (FRTA…YLSV), 247–267 (CILI…VNYI), and 282–302 (IAPF…VIYF).

It belongs to the nematode receptor-like protein sra family.

The protein resides in the membrane. The polypeptide is Serpentine receptor class alpha-17 (sra-17) (Caenorhabditis elegans).